Reading from the N-terminus, the 446-residue chain is Iroquois homeobox protein 5a (446 aa).

Residues 117-173 (NATRDATATLKAWLNEHRKNPYPTKGEKIMLAIITKMTLTQVSTWFANARRRLKKEN) constitute a DNA-binding region (homeobox). Positions 175-312 (MTWTPRNRSE…IHSPPSAPKP (138 aa)) are disordered. Positions 184–201 (EDEEEDENIDLEKNDDDE) are enriched in acidic residues. 2 stretches are compositionally biased toward basic and acidic residues: residues 202 to 220 (PNKP…DHKL) and 227 to 258 (PCDR…RTDL). 2 stretches are compositionally biased toward polar residues: residues 264-274 (KPTTSSPSVLQ) and 293-303 (STGNSNVTSVI).

It belongs to the TALE/IRO homeobox family.

The protein resides in the nucleus. Functionally, transcription factor. Binds to consensus iroquois binding site (IBS) motifs 5'-ACANNTGT-3' or 5'-ACANNNTGT-3' in regulatory elements of target genes. Required, together with irx7, for hyoid joint formation; they act cell autonomously to repress expression of cartilage matrix genes, such as collagen col2a1a, within immature chondrocytes of the joint interzone. May compete with or modify Sox9a activity, thereby reducing Sox9a-mediated activation of col2a1a. Probably acts in the developing hyoid joint downstream of Bmp signaling. In concert with irx6a, plays a role in visual performance. The sequence is that of Iroquois homeobox protein 5a (irx5a) from Danio rerio (Zebrafish).